A 191-amino-acid polypeptide reads, in one-letter code: Outer membrane lipoprotein DolP (191 aa).

A signal peptide spans M1–G18. C19 carries the N-palmitoyl cysteine lipid modification. A lipid anchor (S-diacylglycerol cysteine) is attached at C19. BON domains follow at residues D46–Q115 and N124–K191.

This sequence belongs to the lipoprotein DolP family.

It localises to the cell outer membrane. Plays an important role in maintaining outer membrane integrity. This chain is Outer membrane lipoprotein DolP, found in Escherichia coli O157:H7.